The primary structure comprises 902 residues: Proline-rich transmembrane protein 4 (902 aa).

Residues 1–18 form the signal peptide; sequence MAGRGCLELGLFCWVLLA. 2 disordered regions span residues 120-149 and 262-337; these read FTPW…SQPR and PPPL…SGQP. The span at 125–139 shows a compositional bias: low complexity; the sequence is SSLPPESTSPLSGPT. The span at 271–301 shows a compositional bias: polar residues; it reads SSPSPLDSVASPSSASIKTTPVQHDPTVSTS. The next 5 helical transmembrane spans lie at 371–391, 393–413, 431–451, 465–485, and 501–521; these read AGAL…LLPW, CPPG…AGTT, ALAW…GLGL, PIGL…AALG, and GLHA…SCWG. Ser-642 is subject to Phosphoserine. Disordered stretches follow at residues 700–721, 771–811, and 836–872; these read GARA…TVDF, KTGA…SLCG, and VLSP…ASEL. Residues 703–717 show a composition bias toward polar residues; sequence ANTTQSPASSPSSDC. Residues 786-798 are compositionally biased toward pro residues; that stretch reads SPAPPELPSPGAW. 2 stretches are compositionally biased toward low complexity: residues 799–811 and 843–854; these read PPGS…SLCG and SESSPSLPASGS.

It localises to the membrane. The protein is Proline-rich transmembrane protein 4 (Prrt4) of Rattus norvegicus (Rat).